A 266-amino-acid chain; its full sequence is Integral membrane protein 2B (266 aa).

At 1–54 (MVKVTFNSALAQKEAKKDEPKSSEEALIVPPDAVAVDCKDPGDVVPVGQRRAWC) the chain is on the cytoplasmic side. A helical; Signal-anchor for type II membrane protein transmembrane segment spans residues 55–75 (WCMCFGLAFMLAGVILGGAYL). Residues 76–266 (YKYFALQPDD…KFAVETLICS (191 aa)) lie on the Lumenal side of the membrane. The necessary for interaction with APP and inhibitor effects on APP processing stretch occupies residues 102–134 (EPSADAPAARYQTIEENIKIFEEDAVEFISVPV). The BRICHOS domain occupies 137–231 (FADSDPANIV…LCHDKETYKL (95 aa)). 2 disulfides stabilise this stretch: cysteine 164/cysteine 223 and cysteine 248/cysteine 265. Asparagine 170 carries N-linked (GlcNAc...) asparagine glycosylation.

This sequence belongs to the ITM2 family. In terms of assembly, homodimer; disulfide-linked. Interacts with SPPL2A and SPPL2B. Interacts with APP. Mature BRI2 (mBRI2) interacts with the APP amyloid-beta A4 protein; the interaction occurs at the cell surface and in the endocytic compartments and enable alpha- and beta-secretase-induced APP cleavage inhibition. Mature BRI2 (mBRI2) interacts with the APP C99; the interaction occurs in the endocytic compartments and enable gamma-secretase-induced C99 cleavage inhibition. May form heterodimers with Bri23 peptide and APP amyloid-beta protein 40. Interacts with ADAM7 in sperm; the interaction increases following capacitation. In terms of processing, the ectodomain C-terminal part of the imBRI2 is processed by furin producing a secreted Bri23 peptide and a mature BRI2, membrane form (mBRI2). The remaining part of the ectodomain of mBRI2 containing the BRICHOS domain is cleaved by ADAM10 and is secreted (BRI2C, soluble form). The membrane-bound N-terminal fragment (BRI2C, membrane form) is further proteolytically processed by SPPL2A and SPPL2B through regulated intramembrane proteolysis producing a secreted C-peptide and a BRI2 intracellular domain (BRI2 ICD) released in the cytosol. Shedding by ADAM10 facilitates intramembrane cleavage but is not absolutely required for BRI2 ICD generation. Glycosylation at Asn-170 is important for cell surface localization, but doesn't affect furin- and ADAM10-induced proteolytic processing. In terms of tissue distribution, expressed in the brain, testis, testicular sperm, epididymis and mature epididymal sperm (at protein level).

The protein localises to the golgi apparatus membrane. The protein resides in the cell membrane. Its subcellular location is the endosome membrane. It is found in the secreted. Functionally, plays a regulatory role in the processing of the amyloid-beta A4 precursor protein (APP) and acts as an inhibitor of the amyloid-beta peptide aggregation and fibrils deposition. Plays a role in the induction of neurite outgrowth. Functions as a protease inhibitor by blocking access of secretases to APP cleavage sites. In terms of biological role, mature BRI2 (mBRI2) functions as a modulator of the amyloid-beta A4 precursor protein (APP) processing leading to a strong reduction in the secretion of secretase-processed amyloid-beta protein 40 and amyloid-beta protein 42. Its function is as follows. Bri23 peptide prevents aggregation of APP amyloid-beta protein 42 into toxic oligomers. This chain is Integral membrane protein 2B (Itm2b), found in Mus musculus (Mouse).